We begin with the raw amino-acid sequence, 194 residues long: Pyridoxal 5'-phosphate synthase subunit PdxT (194 aa).

54-56 (GES) lines the L-glutamine pocket. The active-site Nucleophile is Cys-83. Residues Arg-110 and 139–140 (IR) contribute to the L-glutamine site. Catalysis depends on charge relay system residues His-175 and Glu-177.

Belongs to the glutaminase PdxT/SNO family. In terms of assembly, in the presence of PdxS, forms a dodecamer of heterodimers. Only shows activity in the heterodimer.

It carries out the reaction aldehydo-D-ribose 5-phosphate + D-glyceraldehyde 3-phosphate + L-glutamine = pyridoxal 5'-phosphate + L-glutamate + phosphate + 3 H2O + H(+). The catalysed reaction is L-glutamine + H2O = L-glutamate + NH4(+). It functions in the pathway cofactor biosynthesis; pyridoxal 5'-phosphate biosynthesis. Its function is as follows. Catalyzes the hydrolysis of glutamine to glutamate and ammonia as part of the biosynthesis of pyridoxal 5'-phosphate. The resulting ammonia molecule is channeled to the active site of PdxS. This chain is Pyridoxal 5'-phosphate synthase subunit PdxT, found in Methanoregula boonei (strain DSM 21154 / JCM 14090 / 6A8).